A 104-amino-acid chain; its full sequence is Small ribosomal subunit protein uS10 (104 aa).

This sequence belongs to the universal ribosomal protein uS10 family. In terms of assembly, part of the 30S ribosomal subunit.

Its function is as follows. Involved in the binding of tRNA to the ribosomes. In Xanthomonas oryzae pv. oryzae (strain MAFF 311018), this protein is Small ribosomal subunit protein uS10.